Reading from the N-terminus, the 424-residue chain is Enolase (424 aa).

A (2R)-2-phosphoglycerate-binding site is contributed by Gln-162. Glu-204 functions as the Proton donor in the catalytic mechanism. Positions 241, 284, and 311 each coordinate Mg(2+). Residues Lys-336, Arg-365, Ser-366, and Lys-387 each coordinate (2R)-2-phosphoglycerate. Lys-336 serves as the catalytic Proton acceptor.

Belongs to the enolase family. It depends on Mg(2+) as a cofactor.

It is found in the cytoplasm. It localises to the secreted. The protein resides in the cell surface. It carries out the reaction (2R)-2-phosphoglycerate = phosphoenolpyruvate + H2O. Its pathway is carbohydrate degradation; glycolysis; pyruvate from D-glyceraldehyde 3-phosphate: step 4/5. Its function is as follows. Catalyzes the reversible conversion of 2-phosphoglycerate (2-PG) into phosphoenolpyruvate (PEP). It is essential for the degradation of carbohydrates via glycolysis. This is Enolase from Sinorhizobium fredii (strain NBRC 101917 / NGR234).